The chain runs to 645 residues: 1,4-alpha-glucan branching enzyme GlgB (645 aa).

Catalysis depends on Asp-309, which acts as the Nucleophile. The Proton donor role is filled by Glu-352. The interval Val-619–Arg-645 is disordered. Residues Arg-636–Arg-645 show a composition bias toward polar residues.

Belongs to the glycosyl hydrolase 13 family. GlgB subfamily. As to quaternary structure, monomer.

The enzyme catalyses Transfers a segment of a (1-&gt;4)-alpha-D-glucan chain to a primary hydroxy group in a similar glucan chain.. It participates in glycan biosynthesis; glycogen biosynthesis. Catalyzes the formation of the alpha-1,6-glucosidic linkages in glycogen by scission of a 1,4-alpha-linked oligosaccharide from growing alpha-1,4-glucan chains and the subsequent attachment of the oligosaccharide to the alpha-1,6 position. The sequence is that of 1,4-alpha-glucan branching enzyme GlgB from Bacillus cereus (strain AH187).